Reading from the N-terminus, the 679-residue chain is Sodium-dependent phosphate transporter 1 (679 aa).

6 helical membrane-spanning segments follow: residues 21 to 41 (YLWM…SVGA), 62 to 82 (ACIL…AKVS), 100 to 120 (GLLM…QLVA), 158 to 178 (IVMS…ILFF), 203 to 223 (ACTV…LLGF), and 230 to 250 (GTIL…WFFV). Phosphoserine occurs at positions 265 and 269. The next 4 membrane-spanning stretches (helical) occupy residues 511–531 (VSLL…FAHG), 558–578 (VATP…GLWV), 600–620 (FSIE…GLPI), and 650–670 (IFMA…AIMA). The a stretch occupies residues 550 to 558 (DTGDVSSKV).

Belongs to the inorganic phosphate transporter (PiT) (TC 2.A.20) family. As to expression, ubiquitously expressed.

It localises to the cell membrane. It catalyses the reaction 2 Na(+)(out) + phosphate(out) = 2 Na(+)(in) + phosphate(in). Its function is as follows. Sodium-phosphate symporter which preferentially transports the monovalent form of phosphate with a stoichiometry of two sodium ions per phosphate ion. May play a role in extracellular matrix and cartilage calcification as well as in vascular calcification. Essential for cell proliferation but this function is independent of its phosphate transporter activity. Functionally, (Microbial infection) May function as a retroviral receptor as it confers human cells susceptibility to infection to Gibbon Ape Leukemia Virus (GaLV), Simian sarcoma-associated virus (SSAV) and Feline leukemia virus subgroup B (FeLV-B) as well as 10A1 murine leukemia virus (10A1 MLV). The sequence is that of Sodium-dependent phosphate transporter 1 (SLC20A1) from Homo sapiens (Human).